The chain runs to 309 residues: 5-formyl-3-hydroxy-2-methylpyridine 4-carboxylate 5-dehydrogenase (309 aa).

NAD(+)-binding positions include 12–13 (TM), Asp32, 87–89 (VPE), and Lys94.

It belongs to the 3-hydroxyacyl-CoA dehydrogenase family. Homodimer.

The enzyme catalyses 5-formyl-3-hydroxy-2-methylpyridine-4-carboxylate + NAD(+) + H2O = 5-hydroxy-6-methylpyridine-3,4-dicarboxylate + NADH + 2 H(+). It carries out the reaction 5-formyl-3-hydroxy-2-methylpyridine-4-carboxylate + NADH + H(+) = 4-pyridoxate + NAD(+). The protein operates within cofactor degradation; B6 vitamer degradation. In terms of biological role, involved in the degradation of pyridoxine (vitamin B(6)). Catalyzes the oxidation of 5-formyl-3-hydroxy-2-methylpyridine-4-carboxylate (FHMPC) by NAD(+) to 5-hydroxy-6-methylpyridine-3,4-dicarboxylate (HMPDC). Can also catalyze the reduction of FHMPC by NADH to 4-pyridoxic acid. The protein is 5-formyl-3-hydroxy-2-methylpyridine 4-carboxylate 5-dehydrogenase of Mesorhizobium japonicum (strain LMG 29417 / CECT 9101 / MAFF 303099) (Mesorhizobium loti (strain MAFF 303099)).